Here is a 452-residue protein sequence, read N- to C-terminus: Phosphoglucosamine mutase (452 aa).

S98 (phosphoserine intermediate) is an active-site residue. Mg(2+) contacts are provided by S98, D239, D241, and D243. A Phosphoserine modification is found at S98.

It belongs to the phosphohexose mutase family. It depends on Mg(2+) as a cofactor. Activated by phosphorylation.

The enzyme catalyses alpha-D-glucosamine 1-phosphate = D-glucosamine 6-phosphate. Catalyzes the conversion of glucosamine-6-phosphate to glucosamine-1-phosphate. The chain is Phosphoglucosamine mutase from Anaplasma marginale (strain St. Maries).